The sequence spans 114 residues: Large ribosomal subunit protein bL17 (114 aa).

The protein belongs to the bacterial ribosomal protein bL17 family. As to quaternary structure, part of the 50S ribosomal subunit. Contacts protein L32.

The chain is Large ribosomal subunit protein bL17 from Elusimicrobium minutum (strain Pei191).